We begin with the raw amino-acid sequence, 197 residues long: Recombination protein RecR (197 aa).

A C4-type zinc finger spans residues 56-71; sequence CSRCFNLSAEDPCDIC. A Toprim domain is found at 79–174; sequence ETICVVAEPR…RVTRIAFGLP (96 aa).

This sequence belongs to the RecR family.

Functionally, may play a role in DNA repair. It seems to be involved in an RecBC-independent recombinational process of DNA repair. It may act with RecF and RecO. In Gloeobacter violaceus (strain ATCC 29082 / PCC 7421), this protein is Recombination protein RecR.